Consider the following 1438-residue polypeptide: MAMTNREKFKVLADQIKISNQLEQDILEQGELTRIDVSNKNRTWTFQISLPHFLSHEDYLLFTHAIEEEFKEIATVAIDFSIKDTNNQDEFALKYFGHCIDQTRLSPKVKGQLKQKKLIMSGNVLKVLVSNDIERNHFDKACNGSLVKAFRQCGFEIDKVVFETDSTNHDDDLASLEAHIQQEDEQSAREATEKLEKMKAEKAKQQDNNESTVEKCQIGKPIQIENIKPIESIIEEEFKVAIEGVIFDINLKELKSGRHIVELKVTDYTDSLVLKMFTRKNKDDLDHFKALSVGKWVRAQGRIEEDTFVRDLVMMMSDIEEIKKTPKQDKAEDKRVEFHLHTSMSQMDGIPNISAYVEQAAKWGHQALAVTDHNVVQAFPDAHNAAEKHGIKMIYGMEGMLVDDGVPIAYKPTDRNLKDATYVVFDVETTGLSNQYDKIIELAAVKVHNGEIIDKFERFSNPHERLSETIINLTHITDDMLTDAPEIEEVLTEFKEWVGDAIFVAHNASFDMGFIDTGYERLGFGPSTNGVIDTLELSRTINTEYGKHGLNFLAKKYGVELTQHHRAIYDTEATAYIFIKMVQQMKELGVNNHLEINKKLTNEDAYKRARPSHVTLIVQNQEGLKNLFKIVSASLVKYYYRTPRIPRSLLNEYREGILIGTACDEGELFTAVMQKDQSEVEKIAKFYDFIEVQPPALYQDLMDRELIRDNETLTQIYKRLIDAGKSANIPVIATGNAHYLYEHDAIARKILIASQPGNPLNRSTLPEAHFRTTDEMLDDFHFLGEEKAYEIVVTNTNELANKIEKVVPIKDKLFTPRMDGANEEIRELSYSNAKKLYGEDLPQIVIDRLEKELDSIIGNGFSVIYLISQRLVKKSLDDGYLVGSRGSVGSSFVATMTEITEVNPLPPHYICSHCKTSEFFDDGSVGSGFDLPDKKCPTCGNELIKEGQDIPFETFLGFKGDKVPDIDLNFSGEYQPNAHNYTKVLFGEDKVFRAGTIGTVAEKTAFGFVKGYLNDQGIHKRGAEIDRLVKGCTGVKRTTGQHPGGIIVVPDYMDIYDFTPIQFPADDQSAAWMTTHFDFHSIHDNVLKLDILGHDDPTMIRMLQDLSGIDPKTIPVDDKETMQIFSGPESLGVTEDEILCKTGTFGVPEFGTGFVRQMLEDTKPTTFSELVQISGLSHGTDVWLGNAQELIRQGICDLSSVIGCRDDIMVYLMYAGLEPSMAFKTMEFVRKGRGLTDEMVEAMKENNVPDWYLDSCRKIKYMFPKAHAAAYVLMAVRIAYFKVHHPLYYYAAYFTIRASDFDLITMIKDKTSIRNTVKDMYSRYMDLGKKEKDVLTVLEIMNEMAHRGFRLQPISLEKSQAFDFIIEGDTLIPPFISVPGLGENVAQRIVEAREEGPFLSKEDLNKKAGLSQKVIDYLDELGSLPDLPDKAQLSIFDM.

The Exonuclease domain occupies 422 to 578; that stretch reads YVVFDVETTG…YDTEATAYIF (157 aa).

The protein belongs to the DNA polymerase type-C family. PolC subfamily.

It localises to the cytoplasm. It carries out the reaction DNA(n) + a 2'-deoxyribonucleoside 5'-triphosphate = DNA(n+1) + diphosphate. Functionally, required for replicative DNA synthesis. This DNA polymerase also exhibits 3' to 5' exonuclease activity. The sequence is that of DNA polymerase III PolC-type from Staphylococcus epidermidis (strain ATCC 35984 / DSM 28319 / BCRC 17069 / CCUG 31568 / BM 3577 / RP62A).